Reading from the N-terminus, the 143-residue chain is Hexaprenyl-diphosphate synthase small subunit ((2E,6E)-farnesyl-diphosphate specific) (143 aa).

As to quaternary structure, dimer of heterodimer or heterotetramer composed of a small (Hexs-a) and large (Hexs-B) subunit.

The enzyme catalyses 3 isopentenyl diphosphate + (2E,6E)-farnesyl diphosphate = all-trans-hexaprenyl diphosphate + 3 diphosphate. Its function is as follows. Catalyzes the condensation of three molecules of isopentenyl diphosphate with farnesyl diphosphate (FPP) to yield (all-E)-hexaprenyl diphosphate (HexPP; C30), the precursor of the prenyl side chain of menaquinone-6. Large subunit Hexs-B catalyzes the condensation reaction and the final product chain length is cooperatively regulated by both the Hexs-A and Hexs-B subunits using the whole size of the hydrophobic cleft as a ruler. This chain is Hexaprenyl-diphosphate synthase small subunit ((2E,6E)-farnesyl-diphosphate specific) (hexs-a), found in Micrococcus luteus (Micrococcus lysodeikticus).